A 164-amino-acid chain; its full sequence is MGDVEIPPLVKQIVRGLRGLAFLATILATSFMAASHERAIFPFDYKADYTDLMLFKAFLGANIAASLYSFFFVCLPPKSLLWRLAIVLDVIMFGLLVAMDSAAIAAAYLHKHGDSQAFWPPICSQVPTYCYRVILAISIGFGGVFMFLLIIIISISVILNPLLV.

The Cytoplasmic portion of the chain corresponds to 1-15 (MGDVEIPPLVKQIVR). The chain crosses the membrane as a helical span at residues 16–36 (GLRGLAFLATILATSFMAASH). Topologically, residues 37 to 56 (ERAIFPFDYKADYTDLMLFK) are extracellular. Residues 57–77 (AFLGANIAASLYSFFFVCLPP) form a helical membrane-spanning segment. The Cytoplasmic segment spans residues 78–83 (KSLLWR). The chain crosses the membrane as a helical span at residues 84–104 (LAIVLDVIMFGLLVAMDSAAI). Residues 105–132 (AAAYLHKHGDSQAFWPPICSQVPTYCYR) are Extracellular-facing. A helical membrane pass occupies residues 133-153 (VILAISIGFGGVFMFLLIIII). Over 154 to 164 (SISVILNPLLV) the chain is Cytoplasmic.

The protein belongs to the Casparian strip membrane proteins (CASP) family. In terms of assembly, homodimer and heterodimers.

The protein resides in the cell membrane. This chain is CASP-like protein 1C1, found in Populus trichocarpa (Western balsam poplar).